A 176-amino-acid polypeptide reads, in one-letter code: Ribosome maturation factor RimM (176 aa).

One can recognise a PRC barrel domain in the interval 102-175 (KNDYYWNDII…TDKKFILVQW (74 aa)).

The protein belongs to the RimM family. As to quaternary structure, binds ribosomal protein uS19.

The protein resides in the cytoplasm. In terms of biological role, an accessory protein needed during the final step in the assembly of 30S ribosomal subunit, possibly for assembly of the head region. Essential for efficient processing of 16S rRNA. May be needed both before and after RbfA during the maturation of 16S rRNA. It has affinity for free ribosomal 30S subunits but not for 70S ribosomes. The polypeptide is Ribosome maturation factor RimM (Buchnera aphidicola subsp. Acyrthosiphon pisum (strain APS) (Acyrthosiphon pisum symbiotic bacterium)).